The sequence spans 473 residues: Photosystem II CP43 reaction center protein (473 aa).

Residues M1–E14 constitute a propeptide that is removed on maturation. An N-acetylthreonine modification is found at T15. Residue T15 is modified to Phosphothreonine. A run of 5 helical transmembrane segments spans residues L69–A93, L134–N155, K178–T200, K255–S275, and W291–A312. A [CaMn4O5] cluster-binding site is contributed by E367. Residues R447–P471 traverse the membrane as a helical segment.

It belongs to the PsbB/PsbC family. PsbC subfamily. In terms of assembly, PSII is composed of 1 copy each of membrane proteins PsbA, PsbB, PsbC, PsbD, PsbE, PsbF, PsbH, PsbI, PsbJ, PsbK, PsbL, PsbM, PsbT, PsbX, PsbY, PsbZ, Psb30/Ycf12, at least 3 peripheral proteins of the oxygen-evolving complex and a large number of cofactors. It forms dimeric complexes. It depends on Binds multiple chlorophylls and provides some of the ligands for the Ca-4Mn-5O cluster of the oxygen-evolving complex. It may also provide a ligand for a Cl- that is required for oxygen evolution. PSII binds additional chlorophylls, carotenoids and specific lipids. as a cofactor.

It localises to the plastid. The protein resides in the chloroplast thylakoid membrane. Its function is as follows. One of the components of the core complex of photosystem II (PSII). It binds chlorophyll and helps catalyze the primary light-induced photochemical processes of PSII. PSII is a light-driven water:plastoquinone oxidoreductase, using light energy to abstract electrons from H(2)O, generating O(2) and a proton gradient subsequently used for ATP formation. In Nephroselmis olivacea (Green alga), this protein is Photosystem II CP43 reaction center protein.